Reading from the N-terminus, the 391-residue chain is NADH-quinone oxidoreductase subunit D (391 aa).

It belongs to the complex I 49 kDa subunit family. NDH-1 is composed of 14 different subunits. Subunits NuoB, C, D, E, F, and G constitute the peripheral sector of the complex.

Its subcellular location is the cell inner membrane. The catalysed reaction is a quinone + NADH + 5 H(+)(in) = a quinol + NAD(+) + 4 H(+)(out). Functionally, NDH-1 shuttles electrons from NADH, via FMN and iron-sulfur (Fe-S) centers, to quinones in the respiratory chain. The immediate electron acceptor for the enzyme in this species is believed to be ubiquinone. Couples the redox reaction to proton translocation (for every two electrons transferred, four hydrogen ions are translocated across the cytoplasmic membrane), and thus conserves the redox energy in a proton gradient. This chain is NADH-quinone oxidoreductase subunit D, found in Rickettsia rickettsii (strain Sheila Smith).